The primary structure comprises 172 residues: Protein-export protein SecB (172 aa).

The tract at residues 153–172 (AQGQGGDSGIVMPDGSQARH) is disordered.

It belongs to the SecB family. In terms of assembly, homotetramer, a dimer of dimers. One homotetramer interacts with 1 SecA dimer.

It is found in the cytoplasm. Its function is as follows. One of the proteins required for the normal export of preproteins out of the cell cytoplasm. It is a molecular chaperone that binds to a subset of precursor proteins, maintaining them in a translocation-competent state. It also specifically binds to its receptor SecA. This is Protein-export protein SecB from Cupriavidus metallidurans (strain ATCC 43123 / DSM 2839 / NBRC 102507 / CH34) (Ralstonia metallidurans).